The primary structure comprises 355 residues: Beta-porphyranase C (355 aa).

Positions 1–18 (MIKTLKRIPLVFLIAIMA) are cleaved as a signal peptide. Cysteine 19 is lipidated: N-palmitoyl cysteine. Cysteine 19 is lipidated: S-diacylglycerol cysteine. The segment at 22–72 (SGDNGKDKVEEQEQAQEQGEKKGQGEERDKEDGIDGLQPTFLADQDPKPDD) is disordered. The span at 39-54 (QGEKKGQGEERDKEDG) shows a compositional bias: basic and acidic residues. Residues 71–355 (DDKKWIKVEG…WVRVWQLEDL (285 aa)) form the GH16 domain. Positions 110, 208, and 213 each coordinate substrate. Residue glutamate 208 is the Nucleophile of the active site. Glutamate 213 (proton donor) is an active-site residue.

Belongs to the glycosyl hydrolase 16 family.

Its subcellular location is the cell outer membrane. It catalyses the reaction Hydrolysis of beta-D-galactopyranose-(1-&gt;4)-alpha-L-galactopyranose-6-sulfate linkages in porphyran.. In terms of biological role, cleaves the sulfated polysaccharide porphyran at the (1-&gt;4) linkages between beta-D-galactopyranose and alpha-L-galactopyranose-6-sulfate, forming mostly the disaccharide alpha-L-galactopyranose-6-sulfate-(1-&gt;3)-beta-D-galactose. This is Beta-porphyranase C (porC) from Zobellia galactanivorans (strain DSM 12802 / CCUG 47099 / CIP 106680 / NCIMB 13871 / Dsij).